The sequence spans 223 residues: Nicotinamide/nicotinic acid mononucleotide adenylyltransferase 2 (223 aa).

Residues Ser11 and Phe12 each contribute to the NAD(+) site. His19 provides a ligand contact to ATP. 7 residues coordinate NAD(+): Trp87, Thr90, Gly116, Asp118, Leu133, Trp134, and Arg153. 190 to 191 (TR) contributes to the ATP binding site.

The protein belongs to the eukaryotic NMN adenylyltransferase family. Requires a divalent metal cation as cofactor.

The enzyme catalyses beta-nicotinamide D-ribonucleotide + ATP + H(+) = diphosphate + NAD(+). It catalyses the reaction nicotinate beta-D-ribonucleotide + ATP + H(+) = deamido-NAD(+) + diphosphate. It functions in the pathway cofactor biosynthesis; NAD(+) biosynthesis; deamido-NAD(+) from nicotinate D-ribonucleotide: step 1/1. It participates in cofactor biosynthesis; NAD(+) biosynthesis; NAD(+) from nicotinamide D-ribonucleotide: step 1/1. In terms of biological role, catalyzes the formation of NAD(+) from nicotinamide mononucleotide (NMN) and ATP. Can also use the deamidated form; nicotinic acid mononucleotide (NaMN) as substrate. The polypeptide is Nicotinamide/nicotinic acid mononucleotide adenylyltransferase 2 (Caenorhabditis elegans).